The sequence spans 188 residues: Elongation factor P (188 aa).

This sequence belongs to the elongation factor P family.

It is found in the cytoplasm. It functions in the pathway protein biosynthesis; polypeptide chain elongation. In terms of biological role, involved in peptide bond synthesis. Stimulates efficient translation and peptide-bond synthesis on native or reconstituted 70S ribosomes in vitro. Probably functions indirectly by altering the affinity of the ribosome for aminoacyl-tRNA, thus increasing their reactivity as acceptors for peptidyl transferase. The sequence is that of Elongation factor P from Nitrosospira multiformis (strain ATCC 25196 / NCIMB 11849 / C 71).